The sequence spans 102 residues: MPAFSLNAYVALSAVLFALGGIGVLVRRSPLAILMCIELMLNAANLLFVAFGRAHGGYEGQIMAFLVITVAAAEVAIGLALTVLLFRRRAEVDVDRVNELKL.

A run of 3 helical transmembrane segments spans residues 6–26 (LNAY…GVLV), 31–51 (LAIL…FVAF), and 65–85 (FLVI…TVLL).

The protein belongs to the complex I subunit 4L family. In terms of assembly, NDH-1 is composed of 14 different subunits. Subunits NuoA, H, J, K, L, M, N constitute the membrane sector of the complex.

Its subcellular location is the cell membrane. It carries out the reaction a quinone + NADH + 5 H(+)(in) = a quinol + NAD(+) + 4 H(+)(out). In terms of biological role, NDH-1 shuttles electrons from NADH, via FMN and iron-sulfur (Fe-S) centers, to quinones in the respiratory chain. The immediate electron acceptor for the enzyme in this species is believed to be a menaquinone. Couples the redox reaction to proton translocation (for every two electrons transferred, four hydrogen ions are translocated across the cytoplasmic membrane), and thus conserves the redox energy in a proton gradient. This Symbiobacterium thermophilum (strain DSM 24528 / JCM 14929 / IAM 14863 / T) protein is NADH-quinone oxidoreductase subunit K 1.